The primary structure comprises 875 residues: Valine--tRNA ligase (875 aa).

The 'HIGH' region signature appears at 43–53; the sequence is PNVTGVLHMGH. The short motif at 534-538 is the 'KMSKS' region element; the sequence is KMSKS. ATP is bound at residue Lys537. The stretch at 805 to 875 forms a coiled coil; sequence GNLINTEEEL…LKESIAALKK (71 aa).

It belongs to the class-I aminoacyl-tRNA synthetase family. ValS type 1 subfamily. In terms of assembly, monomer.

Its subcellular location is the cytoplasm. The enzyme catalyses tRNA(Val) + L-valine + ATP = L-valyl-tRNA(Val) + AMP + diphosphate. Catalyzes the attachment of valine to tRNA(Val). As ValRS can inadvertently accommodate and process structurally similar amino acids such as threonine, to avoid such errors, it has a 'posttransfer' editing activity that hydrolyzes mischarged Thr-tRNA(Val) in a tRNA-dependent manner. The chain is Valine--tRNA ligase from Phocaeicola vulgatus (strain ATCC 8482 / DSM 1447 / JCM 5826 / CCUG 4940 / NBRC 14291 / NCTC 11154) (Bacteroides vulgatus).